A 209-amino-acid polypeptide reads, in one-letter code: Kynurenine formamidase (209 aa).

Trp-20 is a binding site for substrate. Zn(2+) contacts are provided by His-50, His-54, and Asp-56. Catalysis depends on His-60, which acts as the Proton donor/acceptor. Zn(2+) is bound by residues His-161 and Glu-173.

It belongs to the Cyclase 1 superfamily. KynB family. As to quaternary structure, homodimer. It depends on Zn(2+) as a cofactor.

It carries out the reaction N-formyl-L-kynurenine + H2O = L-kynurenine + formate + H(+). It functions in the pathway amino-acid degradation; L-tryptophan degradation via kynurenine pathway; L-kynurenine from L-tryptophan: step 2/2. Functionally, catalyzes the hydrolysis of N-formyl-L-kynurenine to L-kynurenine, the second step in the kynurenine pathway of tryptophan degradation. The sequence is that of Kynurenine formamidase from Bacillus cereus (strain ATCC 14579 / DSM 31 / CCUG 7414 / JCM 2152 / NBRC 15305 / NCIMB 9373 / NCTC 2599 / NRRL B-3711).